Consider the following 301-residue polypeptide: Phosphatidylserine decarboxylase proenzyme (301 aa).

Catalysis depends on charge relay system; for autoendoproteolytic cleavage activity residues Asp115, His171, and Ser258. Ser258 functions as the Schiff-base intermediate with substrate; via pyruvic acid; for decarboxylase activity in the catalytic mechanism. Ser258 is modified (pyruvic acid (Ser); by autocatalysis).

This sequence belongs to the phosphatidylserine decarboxylase family. PSD-B subfamily. Prokaryotic type II sub-subfamily. Heterodimer of a large membrane-associated beta subunit and a small pyruvoyl-containing alpha subunit. Pyruvate serves as cofactor. Post-translationally, is synthesized initially as an inactive proenzyme. Formation of the active enzyme involves a self-maturation process in which the active site pyruvoyl group is generated from an internal serine residue via an autocatalytic post-translational modification. Two non-identical subunits are generated from the proenzyme in this reaction, and the pyruvate is formed at the N-terminus of the alpha chain, which is derived from the carboxyl end of the proenzyme. The autoendoproteolytic cleavage occurs by a canonical serine protease mechanism, in which the side chain hydroxyl group of the serine supplies its oxygen atom to form the C-terminus of the beta chain, while the remainder of the serine residue undergoes an oxidative deamination to produce ammonia and the pyruvoyl prosthetic group on the alpha chain. During this reaction, the Ser that is part of the protease active site of the proenzyme becomes the pyruvoyl prosthetic group, which constitutes an essential element of the active site of the mature decarboxylase.

It localises to the cell membrane. It carries out the reaction a 1,2-diacyl-sn-glycero-3-phospho-L-serine + H(+) = a 1,2-diacyl-sn-glycero-3-phosphoethanolamine + CO2. It participates in phospholipid metabolism; phosphatidylethanolamine biosynthesis; phosphatidylethanolamine from CDP-diacylglycerol: step 2/2. Functionally, catalyzes the formation of phosphatidylethanolamine (PtdEtn) from phosphatidylserine (PtdSer). The chain is Phosphatidylserine decarboxylase proenzyme from Chlamydia pneumoniae (Chlamydophila pneumoniae).